The following is a 368-amino-acid chain: Peptide chain release factor 2 (368 aa).

Q250 bears the N5-methylglutamine mark.

Belongs to the prokaryotic/mitochondrial release factor family. In terms of processing, methylated by PrmC. Methylation increases the termination efficiency of RF2.

It localises to the cytoplasm. In terms of biological role, peptide chain release factor 2 directs the termination of translation in response to the peptide chain termination codons UGA and UAA. The polypeptide is Peptide chain release factor 2 (Rickettsia africae (strain ESF-5)).